The chain runs to 395 residues: Acetate kinase (395 aa).

Asparagine 7 is a binding site for Mg(2+). Lysine 14 contacts ATP. Arginine 90 contributes to the substrate binding site. The active-site Proton donor/acceptor is aspartate 147. ATP-binding positions include 207 to 211 (HLGNG), 282 to 284 (DFR), and 330 to 334 (GLGEN). Glutamate 383 provides a ligand contact to Mg(2+).

The protein belongs to the acetokinase family. Homodimer. It depends on Mg(2+) as a cofactor. Mn(2+) serves as cofactor.

Its subcellular location is the cytoplasm. It carries out the reaction acetate + ATP = acetyl phosphate + ADP. It participates in metabolic intermediate biosynthesis; acetyl-CoA biosynthesis; acetyl-CoA from acetate: step 1/2. Functionally, catalyzes the formation of acetyl phosphate from acetate and ATP. Can also catalyze the reverse reaction. The polypeptide is Acetate kinase (Lachnoclostridium phytofermentans (strain ATCC 700394 / DSM 18823 / ISDg) (Clostridium phytofermentans)).